Consider the following 462-residue polypeptide: Hyaluronidase-1 (462 aa).

A signal peptide spans 1-52; that stretch reads MLGLTQHAQKVWRMKPFSPEVSPGSSPATAGHLLRISTLFLTLLELAQVCRG. 2 disulfides stabilise this stretch: C71/C361 and C235/C249. Residues N98 and N127 are each glycosylated (N-linked (GlcNAc...) asparagine). Residue E159 is the Proton donor of the active site. N-linked (GlcNAc...) asparagine glycans are attached at residues N244, N265, and N378. Cystine bridges form between C386–C397, C391–C446, and C448–C457. Positions 446–457 constitute an EGF-like domain; sequence CRCYRGWRGKWC.

The protein belongs to the glycosyl hydrolase 56 family. Highly expressed in liver, kidney, lung and skin.

The protein localises to the secreted. Its subcellular location is the lysosome. The enzyme catalyses Random hydrolysis of (1-&gt;4)-linkages between N-acetyl-beta-D-glucosamine and D-glucuronate residues in hyaluronate.. Its function is as follows. May have a role in promoting tumor progression. May block the TGFB1-enhanced cell growth. This is Hyaluronidase-1 (Hyal1) from Mus musculus (Mouse).